Reading from the N-terminus, the 215-residue chain is Fanconi anemia core complex-associated protein 24 (215 aa).

Residues 160-215 (LRTVQQIPGVGKVKAPLLLQKFPSIQQLSNASIGELEQVVGQAVAQQIHAFFTQPR) form a ruvA domain 2-like region.

As to quaternary structure, belongs to the multisubunit FA complex composed of FANCA, FANCB, FANCC, FANCE, FANCF, FANCG, FANCL/PHF9, FANCM and FAAP24. Interacts with FANCM.

It localises to the nucleus. Its function is as follows. Plays a role in DNA repair through recruitment of the FA core complex to damaged DNA. Regulates FANCD2 monoubiquitination upon DNA damage. Induces chromosomal instability as well as hypersensitivity to DNA cross-linking agents, when repressed. Targets FANCM/FAAP24 complex to the DNA, preferentially to single strand DNA. This chain is Fanconi anemia core complex-associated protein 24, found in Homo sapiens (Human).